The chain runs to 106 residues: ATP-dependent Clp protease adapter protein ClpS (106 aa).

Residues 1–10 (MSQKTVHDQD) are compositionally biased toward basic and acidic residues. A disordered region spans residues 1-23 (MSQKTVHDQDNALLLETGNTKVA).

It belongs to the ClpS family. In terms of assembly, binds to the N-terminal domain of the chaperone ClpA.

Involved in the modulation of the specificity of the ClpAP-mediated ATP-dependent protein degradation. The chain is ATP-dependent Clp protease adapter protein ClpS from Xylella fastidiosa (strain M23).